The primary structure comprises 119 residues: Large ribosomal subunit protein uL22 (119 aa).

Belongs to the universal ribosomal protein uL22 family. Part of the 50S ribosomal subunit.

This protein binds specifically to 23S rRNA; its binding is stimulated by other ribosomal proteins, e.g. L4, L17, and L20. It is important during the early stages of 50S assembly. It makes multiple contacts with different domains of the 23S rRNA in the assembled 50S subunit and ribosome. In terms of biological role, the globular domain of the protein is located near the polypeptide exit tunnel on the outside of the subunit, while an extended beta-hairpin is found that lines the wall of the exit tunnel in the center of the 70S ribosome. The protein is Large ribosomal subunit protein uL22 of Rickettsia typhi (strain ATCC VR-144 / Wilmington).